Here is a 54-residue protein sequence, read N- to C-terminus: ATP synthase F(0) complex subunit 8 (54 aa).

The helical transmembrane segment at leucine 4 to isoleucine 24 threads the bilayer. Residues asparagine 35–tryptophan 54 form a disordered region. Residues alanine 42–tryptophan 54 show a composition bias toward basic and acidic residues.

It belongs to the ATPase protein 8 family. As to quaternary structure, component of the ATP synthase complex composed at least of ATP5F1A/subunit alpha, ATP5F1B/subunit beta, ATP5MC1/subunit c (homooctomer), MT-ATP6/subunit a, MT-ATP8/subunit 8, ATP5ME/subunit e, ATP5MF/subunit f, ATP5MG/subunit g, ATP5MK/subunit k, ATP5MJ/subunit j, ATP5F1C/subunit gamma, ATP5F1D/subunit delta, ATP5F1E/subunit epsilon, ATP5PF/subunit F6, ATP5PB/subunit b, ATP5PD/subunit d, ATP5PO/subunit OSCP. ATP synthase complex consists of a soluble F(1) head domain (subunits alpha(3) and beta(3)) - the catalytic core - and a membrane F(0) domain - the membrane proton channel (subunits c, a, 8, e, f, g, k and j). These two domains are linked by a central stalk (subunits gamma, delta, and epsilon) rotating inside the F1 region and a stationary peripheral stalk (subunits F6, b, d, and OSCP).

The protein localises to the mitochondrion membrane. Functionally, subunit 8, of the mitochondrial membrane ATP synthase complex (F(1)F(0) ATP synthase or Complex V) that produces ATP from ADP in the presence of a proton gradient across the membrane which is generated by electron transport complexes of the respiratory chain. ATP synthase complex consist of a soluble F(1) head domain - the catalytic core - and a membrane F(1) domain - the membrane proton channel. These two domains are linked by a central stalk rotating inside the F(1) region and a stationary peripheral stalk. During catalysis, ATP synthesis in the catalytic domain of F(1) is coupled via a rotary mechanism of the central stalk subunits to proton translocation. In vivo, can only synthesize ATP although its ATP hydrolase activity can be activated artificially in vitro. Part of the complex F(0) domain. The polypeptide is ATP synthase F(0) complex subunit 8 (Cyprinus carpio (Common carp)).